Here is a 143-residue protein sequence, read N- to C-terminus: MSLSSKDKATVKLFWGRMSGKAELIGADALSRMLAVYPQTKIYFSHWKSLSPGSSEVKKHGKTIMMGIGDAVTKMEDLERGLLTLSELHAFKLRVDPTNFKLLSLNILVVMAIMFPEDFTPMAHLAVDKFLCALALALSEKYR.

N-acetylserine is present on Ser-2. Positions Ser-2 to Arg-143 constitute a Globin domain. Position 60 (His-60) interacts with O2. Residue His-89 participates in heme b binding.

The protein belongs to the globin family. As to quaternary structure, hb 2 is a heterotetramer of two alpha-2 and two beta-1 chains. Hb 3 is a heterotetramer of two alpha-2 and two beta-2 chains. In terms of tissue distribution, red blood cells.

Involved in oxygen transport from gills to the various peripheral tissues. In Arctogadus glacialis (Arctic cod), this protein is Hemoglobin subunit alpha-2 (hba2).